Here is a 530-residue protein sequence, read N- to C-terminus: Alkali-sensitive linkage protein 1 (530 aa).

Residues 1-18 form the signal peptide; the sequence is MRTTFATVALAFLSTVGA. N-linked (GlcNAc...) asparagine glycosylation is present at Asn-55. The disordered stretch occupies residues 69 to 90; that stretch reads SVTESSDDGASTALPTTSTESV. Asn-120 and Asn-128 each carry an N-linked (GlcNAc...) asparagine glycan.

The protein resides in the endoplasmic reticulum. It is found in the golgi apparatus. It localises to the secreted. Its subcellular location is the cell wall. This is Alkali-sensitive linkage protein 1 (asl1) from Schizosaccharomyces pombe (strain 972 / ATCC 24843) (Fission yeast).